Consider the following 427-residue polypeptide: Gamma-glutamyl phosphate reductase (427 aa).

It belongs to the gamma-glutamyl phosphate reductase family.

The protein localises to the cytoplasm. The enzyme catalyses L-glutamate 5-semialdehyde + phosphate + NADP(+) = L-glutamyl 5-phosphate + NADPH + H(+). It participates in amino-acid biosynthesis; L-proline biosynthesis; L-glutamate 5-semialdehyde from L-glutamate: step 2/2. Its function is as follows. Catalyzes the NADPH-dependent reduction of L-glutamate 5-phosphate into L-glutamate 5-semialdehyde and phosphate. The product spontaneously undergoes cyclization to form 1-pyrroline-5-carboxylate. The polypeptide is Gamma-glutamyl phosphate reductase (Streptomyces griseus subsp. griseus (strain JCM 4626 / CBS 651.72 / NBRC 13350 / KCC S-0626 / ISP 5235)).